A 181-amino-acid chain; its full sequence is Isopentenyl-diphosphate Delta-isomerase (181 aa).

2 residues coordinate Mn(2+): histidine 24 and histidine 30. The Nudix hydrolase domain occupies 28-168; it reads LLHLAFSVLL…PDTFSVWFPT (141 aa). Cysteine 68 is a catalytic residue. Cysteine 68 is a binding site for Mg(2+). Residue histidine 70 participates in Mn(2+) binding. A Mg(2+)-binding site is contributed by glutamate 88. Residues glutamate 117 and glutamate 119 each contribute to the Mn(2+) site. Residue glutamate 119 is part of the active site.

Belongs to the IPP isomerase type 1 family. Requires Mg(2+) as cofactor. The cofactor is Mn(2+).

It localises to the cytoplasm. It catalyses the reaction isopentenyl diphosphate = dimethylallyl diphosphate. The protein operates within isoprenoid biosynthesis; dimethylallyl diphosphate biosynthesis; dimethylallyl diphosphate from isopentenyl diphosphate: step 1/1. In terms of biological role, catalyzes the 1,3-allylic rearrangement of the homoallylic substrate isopentenyl (IPP) to its highly electrophilic allylic isomer, dimethylallyl diphosphate (DMAPP). This Aliivibrio fischeri (strain ATCC 700601 / ES114) (Vibrio fischeri) protein is Isopentenyl-diphosphate Delta-isomerase.